The following is a 78-amino-acid chain: Glycophorin-E (78 aa).

Positions 1–19 (MYGKIIFVLLLSGIVSISA) are cleaved as a signal peptide. The Extracellular segment spans residues 20 to 52 (SSTTGVAMHTSTSSSVTKSYISSQTNGITLINW). Residues 53 to 73 (WAMARVIFEVMLVVVGMIILI) form a helical membrane-spanning segment. The Cytoplasmic portion of the chain corresponds to 74–78 (SYCIR).

It belongs to the glycophorin-A family. Post-translationally, the N-terminal extracellular domain is heavily glycosylated on serine and threonine residues. As to expression, erythrocytes.

The protein localises to the membrane. This protein is a minor sialoglycoprotein in human erythrocyte membranes. In Homo sapiens (Human), this protein is Glycophorin-E (GYPE).